Reading from the N-terminus, the 296-residue chain is 4-hydroxy-tetrahydrodipicolinate synthase (296 aa).

Thr50 contributes to the pyruvate binding site. Tyr138 functions as the Proton donor/acceptor in the catalytic mechanism. Lys166 serves as the catalytic Schiff-base intermediate with substrate. Ile208 provides a ligand contact to pyruvate.

It belongs to the DapA family. Homotetramer; dimer of dimers.

It localises to the cytoplasm. The enzyme catalyses L-aspartate 4-semialdehyde + pyruvate = (2S,4S)-4-hydroxy-2,3,4,5-tetrahydrodipicolinate + H2O + H(+). The protein operates within amino-acid biosynthesis; L-lysine biosynthesis via DAP pathway; (S)-tetrahydrodipicolinate from L-aspartate: step 3/4. Functionally, catalyzes the condensation of (S)-aspartate-beta-semialdehyde [(S)-ASA] and pyruvate to 4-hydroxy-tetrahydrodipicolinate (HTPA). This is 4-hydroxy-tetrahydrodipicolinate synthase from Thiobacillus denitrificans (strain ATCC 25259 / T1).